A 424-amino-acid chain; its full sequence is MCDRNGGRRLRQWLIEQIDSSMYPGLIWENDEKTMFRIPWKHAGKQDYNQEVDASIFKAWAVFKGKFKEGDKAEPATWKTRLRCALNKSPDFEEVTDRSQLDISEPYKVYRIVPEEEQKCKLGVAPAGCMSEVPEMECGRSEIEELIKEPSVDEYMGMTKRSPSPPEACRSQILPDWWVQQPSAGLPLVTGYAAYDTHHSAFSQMVISFYYGGKLVGQATTTCLEGCRLSLSQPGLPKLYGPDGLEPVCFPTADTIPSERQRQVTRKLFGHLERGVLLHSNRKGVFVKRLCQGRVFCSGNAVVCKGRPNKLERDEVVQVFDTNQFIRELQQFYATQSRLPDSRVVLCFGEEFPDTVPLRSKLILVQVEQLYARQLVEEAGKSCGAGSLMPALEEPQPDQAFRMFPDICTSHQRPFFRENQQITV.

Residues 7–114 (GRRLRQWLIE…EPYKVYRIVP (108 aa)) constitute a DNA-binding region (IRF tryptophan pentad repeat).

Belongs to the IRF family. As to quaternary structure, interacts with COPS2. Interacts (via C-terminus) with TRIM21 (via C-terminus). Interacts with the BATF-JUNB heterodimer. Interacts with BATF (via bZIP domain); the interaction is direct. Interacts with SPI1. Post-translationally, ubiquitinated. Ubiquitination by TRIM21 in macrophages, a process that is strongly increased upon interferon gamma stimulation, leds to the enhanced transcriptional activity of target cytokine genes. Ubiquitination leads to its degradation by the proteasome. In terms of processing, sumoylated with SUMO3. Desumoylated by SENP1. In terms of tissue distribution, expressed in bone marrow macrophages (at protein level). Mainly expressed in lymphoid tissues. Predominantly expressed in CD8(+)-expressing dendritic cells.

It localises to the nucleus. Its subcellular location is the cytoplasm. Functionally, transcription factor that specifically binds to the upstream regulatory region of type I interferon (IFN) and IFN-inducible MHC class I genes (the interferon consensus sequence (ICS)). Can both act as a transcriptional activator or repressor. Plays a negative regulatory role in cells of the immune system. Involved in CD8(+) dendritic cell differentiation by forming a complex with the BATF-JUNB heterodimer in immune cells, leading to recognition of AICE sequence (5'-TGAnTCA/GAAA-3'), an immune-specific regulatory element, followed by cooperative binding of BATF and IRF8 and activation of genes. Required for the development of plasmacytoid dendritic cells (pDCs), which produce most of the type I IFN in response to viral infection. Positively regulates macroautophagy in dendritic cells. Acts as a transcriptional repressor of osteoclast differentiation factors such as NFATC1 and EEIG1. The protein is Interferon regulatory factor 8 of Mus musculus (Mouse).